A 130-amino-acid chain; its full sequence is 3-aminoacrylate deaminase RutC (130 aa).

This sequence belongs to the RutC family.

The enzyme catalyses (Z)-3-aminoacrylate + H2O + H(+) = 3-oxopropanoate + NH4(+). Its function is as follows. Involved in pyrimidine catabolism. Catalyzes the deamination of 3-aminoacrylate to malonic semialdehyde, a reaction that can also occur spontaneously. RutC may facilitate the reaction and modulate the metabolic fitness, rather than catalyzing essential functions. The chain is 3-aminoacrylate deaminase RutC from Haliangium ochraceum (strain DSM 14365 / JCM 11303 / SMP-2).